The chain runs to 312 residues: Ribosomal protein L11 methyltransferase (312 aa).

Residues threonine 163, glycine 184, aspartate 206, and asparagine 248 each coordinate S-adenosyl-L-methionine.

It belongs to the methyltransferase superfamily. PrmA family.

Its subcellular location is the cytoplasm. The enzyme catalyses L-lysyl-[protein] + 3 S-adenosyl-L-methionine = N(6),N(6),N(6)-trimethyl-L-lysyl-[protein] + 3 S-adenosyl-L-homocysteine + 3 H(+). Its function is as follows. Methylates ribosomal protein L11. This is Ribosomal protein L11 methyltransferase from Clostridium kluyveri (strain NBRC 12016).